The following is a 123-amino-acid chain: Large ribosomal subunit protein uL29x (123 aa).

This sequence belongs to the universal ribosomal protein uL29 family.

The polypeptide is Large ribosomal subunit protein uL29x (RPL35C) (Arabidopsis thaliana (Mouse-ear cress)).